The sequence spans 53 residues: UPF0391 membrane protein TM1040_2720 (53 aa).

A run of 2 helical transmembrane segments spans residues Trp4 to Ala24 and Gly29 to Leu48.

The protein belongs to the UPF0391 family.

Its subcellular location is the cell membrane. This chain is UPF0391 membrane protein TM1040_2720, found in Ruegeria sp. (strain TM1040) (Silicibacter sp.).